The following is a 147-amino-acid chain: MSLFTILNGPNLNLLGQRQPEIYGYETLADVEADCRAIAEAAGHELFFAQSNREYELIDWIHEARGKSAGIVINPGAFTHTSVAILDALNAFEAPVIEVHISNIHKREVFRHHSYVSTRAEGVIAGLGIEGYGVALRHLINLFSRSS.

Catalysis depends on tyrosine 23, which acts as the Proton acceptor. Residues asparagine 74, histidine 80, and aspartate 87 each contribute to the substrate site. Histidine 100 acts as the Proton donor in catalysis. Substrate-binding positions include 101–102 and arginine 111; that span reads IS.

Belongs to the type-II 3-dehydroquinase family. In terms of assembly, homododecamer.

The catalysed reaction is 3-dehydroquinate = 3-dehydroshikimate + H2O. Its pathway is metabolic intermediate biosynthesis; chorismate biosynthesis; chorismate from D-erythrose 4-phosphate and phosphoenolpyruvate: step 3/7. In terms of biological role, catalyzes a trans-dehydration via an enolate intermediate. The sequence is that of 3-dehydroquinate dehydratase 2 (aroQ2) from Agrobacterium fabrum (strain C58 / ATCC 33970) (Agrobacterium tumefaciens (strain C58)).